Consider the following 102-residue polypeptide: Aspartyl/glutamyl-tRNA(Asn/Gln) amidotransferase subunit C (102 aa).

This sequence belongs to the GatC family. As to quaternary structure, heterotrimer of A, B and C subunits.

It catalyses the reaction L-glutamyl-tRNA(Gln) + L-glutamine + ATP + H2O = L-glutaminyl-tRNA(Gln) + L-glutamate + ADP + phosphate + H(+). The catalysed reaction is L-aspartyl-tRNA(Asn) + L-glutamine + ATP + H2O = L-asparaginyl-tRNA(Asn) + L-glutamate + ADP + phosphate + 2 H(+). Allows the formation of correctly charged Asn-tRNA(Asn) or Gln-tRNA(Gln) through the transamidation of misacylated Asp-tRNA(Asn) or Glu-tRNA(Gln) in organisms which lack either or both of asparaginyl-tRNA or glutaminyl-tRNA synthetases. The reaction takes place in the presence of glutamine and ATP through an activated phospho-Asp-tRNA(Asn) or phospho-Glu-tRNA(Gln). The polypeptide is Aspartyl/glutamyl-tRNA(Asn/Gln) amidotransferase subunit C (Bordetella bronchiseptica (strain ATCC BAA-588 / NCTC 13252 / RB50) (Alcaligenes bronchisepticus)).